We begin with the raw amino-acid sequence, 443 residues long: ATP-dependent protease ATPase subunit HslU (443 aa).

ATP contacts are provided by residues Ile-18, 60–65 (GVGKTE), Asp-256, Glu-321, and Arg-393.

Belongs to the ClpX chaperone family. HslU subfamily. In terms of assembly, a double ring-shaped homohexamer of HslV is capped on each side by a ring-shaped HslU homohexamer. The assembly of the HslU/HslV complex is dependent on binding of ATP.

The protein resides in the cytoplasm. ATPase subunit of a proteasome-like degradation complex; this subunit has chaperone activity. The binding of ATP and its subsequent hydrolysis by HslU are essential for unfolding of protein substrates subsequently hydrolyzed by HslV. HslU recognizes the N-terminal part of its protein substrates and unfolds these before they are guided to HslV for hydrolysis. The protein is ATP-dependent protease ATPase subunit HslU of Nitrosospira multiformis (strain ATCC 25196 / NCIMB 11849 / C 71).